A 391-amino-acid chain; its full sequence is NAD(P)H-quinone oxidoreductase subunit H, chloroplastic (391 aa).

The protein belongs to the complex I 49 kDa subunit family. As to quaternary structure, NDH is composed of at least 16 different subunits, 5 of which are encoded in the nucleus.

It is found in the plastid. Its subcellular location is the chloroplast thylakoid membrane. It catalyses the reaction a plastoquinone + NADH + (n+1) H(+)(in) = a plastoquinol + NAD(+) + n H(+)(out). The enzyme catalyses a plastoquinone + NADPH + (n+1) H(+)(in) = a plastoquinol + NADP(+) + n H(+)(out). Functionally, NDH shuttles electrons from NAD(P)H:plastoquinone, via FMN and iron-sulfur (Fe-S) centers, to quinones in the photosynthetic chain and possibly in a chloroplast respiratory chain. The immediate electron acceptor for the enzyme in this species is believed to be plastoquinone. Couples the redox reaction to proton translocation, and thus conserves the redox energy in a proton gradient. The protein is NAD(P)H-quinone oxidoreductase subunit H, chloroplastic of Nephroselmis olivacea (Green alga).